The primary structure comprises 326 residues: MLTLARQQQRQNIRWLLCLSVLMLLALLLSLCAGEQWISPGDWFSPRGELFVWQIRLPRTLAVLLVGAALAISGAVMQALFENPLAEPGLLGVSNGAGVGLIAAVLLGQGQLPNWALGLCAIAGALIITLILLRFARRHLSTSRLLLAGVALGIICSALMTWAIYFSTSVDLRQLMYWMMGGFGGVDWRQSWLMLALIPVLLWICCQSRPMNMLALGEISARQLGLPLWFWRNVLVAATGWMVGVSVALAGAIGFIGLVIPHILRLCGLTDHRVLLPGCALAGASALLLADVVARLALAAAELPIGVVTATLGAPVFIWLLLKAGR.

Transmembrane regions (helical) follow at residues 15–35 (WLLC…CAGE), 61–81 (LAVL…QALF), 88–108 (PGLL…VLLG), 112–132 (LPNW…TLIL), 146–166 (LLAG…AIYF), 184–204 (GGVD…LLWI), 240–260 (GWMV…GLVI), 274–294 (VLLP…DVVA), and 302–322 (ELPI…WLLL).

It belongs to the binding-protein-dependent transport system permease family. FecCD subfamily. As to quaternary structure, the complex is composed of two ATP-binding proteins (BtuD), two transmembrane proteins (BtuC) and a solute-binding protein (BtuF).

It is found in the cell inner membrane. In terms of biological role, part of the ABC transporter complex BtuCDF involved in vitamin B12 import. Involved in the translocation of the substrate across the membrane. The protein is Vitamin B12 import system permease protein BtuC of Escherichia coli O8 (strain IAI1).